The primary structure comprises 62 residues: Large ribosomal subunit protein bL28 (62 aa).

The tract at residues 1 to 22 (MGKQCFVTGRKASTGNRRSHAL) is disordered.

It belongs to the bacterial ribosomal protein bL28 family.

The polypeptide is Large ribosomal subunit protein bL28 (Staphylococcus aureus (strain N315)).